Consider the following 201-residue polypeptide: Large ribosomal subunit protein uL4 (201 aa).

The interval 39–70 is disordered; the sequence is GRQGTKAQKTRSEVSGGGKKPWRQKGTGRARA.

Belongs to the universal ribosomal protein uL4 family. As to quaternary structure, part of the 50S ribosomal subunit.

Functionally, one of the primary rRNA binding proteins, this protein initially binds near the 5'-end of the 23S rRNA. It is important during the early stages of 50S assembly. It makes multiple contacts with different domains of the 23S rRNA in the assembled 50S subunit and ribosome. Its function is as follows. Forms part of the polypeptide exit tunnel. This chain is Large ribosomal subunit protein uL4, found in Marinobacter nauticus (strain ATCC 700491 / DSM 11845 / VT8) (Marinobacter aquaeolei).